Consider the following 274-residue polypeptide: D-aminopeptidase (274 aa).

Aspartate 8, glutamate 10, histidine 60, and histidine 104 together coordinate Zn(2+). Residue histidine 115 is the Nucleophile of the active site. Glutamate 133 lines the Zn(2+) pocket.

Belongs to the peptidase M55 family. In terms of assembly, homodecamer. A 20 Angstroms wide channel runs through the complex, giving access to a central chamber holding the active sites. Zn(2+) is required as a cofactor.

Functionally, hydrolyzes N-terminal residues in D-amino acid containing peptides. Among the tested substrates, the highest activities are with D-Ala-D-Ala and D-Ala-Gly-Gly. The physiological role is not clear. This Bacillus subtilis (strain 168) protein is D-aminopeptidase (dppA).